The chain runs to 369 residues: Phosphoribosyl pyrophosphate synthase-associated protein 2 (369 aa).

Methionine 1 carries the N-acetylmethionine modification. Threonine 5 carries the post-translational modification Phosphothreonine. Residues serine 219, serine 227, and serine 233 each carry the phosphoserine modification.

This sequence belongs to the ribose-phosphate pyrophosphokinase family. As to quaternary structure, binds to PRPS1 and PRPS2.

Seems to play a negative regulatory role in 5-phosphoribose 1-diphosphate synthesis. The chain is Phosphoribosyl pyrophosphate synthase-associated protein 2 (PRPSAP2) from Pongo abelii (Sumatran orangutan).